Reading from the N-terminus, the 248-residue chain is Tetraspanin-17 (248 aa).

The Cytoplasmic segment spans residues Met1–Gly7. The helical transmembrane segment at Phe8 to Leu28 threads the bilayer. Topologically, residues Tyr29–Gln44 are extracellular. The chain crosses the membrane as a helical span at residues Phe45–Cys65. Residues Arg66–Arg69 are Cytoplasmic-facing. Residues Leu70–Ile90 traverse the membrane as a helical segment. Residues Lys91–Lys210 are Extracellular-facing. N-linked (GlcNAc...) asparagine glycans are attached at residues Asn96, Asn109, and Asn141. The helical transmembrane segment at Tyr211–Trp231 threads the bilayer. Residues Ser232 to Ser248 lie on the Cytoplasmic side of the membrane.

The protein belongs to the tetraspanin (TM4SF) family.

It is found in the membrane. Functionally, may be involved in the regulation of cell differentiation. This chain is Tetraspanin-17 (TET17), found in Arabidopsis thaliana (Mouse-ear cress).